Consider the following 502-residue polypeptide: Cytochrome P450 CYP94D109 (502 aa).

A helical transmembrane segment spans residues 3 to 23 (SLSLIFISFITLIVFLVVSAS). Heme is bound at residue C437.

Belongs to the cytochrome P450 family. Mainly expressed in leaves and, at low levels, in roots, fruits and stems.

It is found in the membrane. It participates in steroid metabolism; cholesterol metabolism. Involved in the biosynthesis of spiroketal steroid and saponin natural products from cholesterol such as diosgenin and analogs (e.g. furostanol and spirostanol), plant defense compounds used as main precursors for the industrial production of steroid hormones. During the 5,6-spiroketalization of cholesterol, may catalyze the 27-monohydroxylation of furostanol-type steroid to an intermediate product that undergoes a stereospecific formation of the terminal heterocycle to yield diosgenin. In Paris polyphylla (Daiswa polyphylla), this protein is Cytochrome P450 CYP94D109.